The primary structure comprises 375 residues: Putative F-box/kelch-repeat protein At3g24610 (375 aa).

Residues 1 to 27 are disordered; the sequence is MSNEAPEVEPHSKRRKKEASPSSSSGF. The region spanning 25–71 is the F-box domain; that stretch reads SGFLQSLPEAVAMICLARVSRLDHAALSLVSKSCRSMVLSPELYQTR. The Kelch repeat unit spans residues 138–183; it reads KINVWGGCKYKHYYDWGEVFDPKTQTWADMSIPKPVREEKIYVVDS.

The chain is Putative F-box/kelch-repeat protein At3g24610 from Arabidopsis thaliana (Mouse-ear cress).